A 770-amino-acid polypeptide reads, in one-letter code: Rho guanine nucleotide exchange factor 38 (770 aa).

Residues 33–88 (KTDTVVDSSVSGDHSGSLRRSQSDRTEYNQKLQEKMTPQAECSSAETPTPEDEQQV) are disordered. Thr-34 is modified (phosphothreonine). The span at 37-47 (VVDSSVSGDHS) shows a compositional bias: low complexity. Basic and acidic residues predominate over residues 53–66 (SQSDRTEYNQKLQE). A DH domain is found at 94 to 285 (KRAKIIRELI…KDINVNINEL (192 aa)). One can recognise a BAR domain in the interval 327-542 (LKILTRGESQ…VHSLTFVKEN (216 aa)). 2 SH3 domains span residues 581–644 (GAEE…PHNP) and 706–769 (VDEQ…KMTY).

Functionally, may act as a guanine-nucleotide releasing factor. In Mus musculus (Mouse), this protein is Rho guanine nucleotide exchange factor 38 (Arhgef38).